A 939-amino-acid chain; its full sequence is Vacuolar membrane protease (939 aa).

The Cytoplasmic segment spans residues 1–11 (MGFNSIFKFRK). Residues 12-32 (TSLSLLLFAVYFIIGILYFID) form a helical membrane-spanning segment. At 33-356 (KTRYKHSLPI…TFVAIPSTKL (324 aa)) the chain is on the vacuolar side. Residues Asn59, Asn88, and Asn114 are each glycosylated (N-linked (GlcNAc...) asparagine). Residues His149 and Asp161 each coordinate Zn(2+). Glu193 serves as the catalytic Proton acceptor. Zn(2+) contacts are provided by Glu194, Glu219, and His293. Asn326 is a glycosylation site (N-linked (GlcNAc...) asparagine). A helical membrane pass occupies residues 357–377 (FWINIALLIIMPIISIFLFSI). The Cytoplasmic segment spans residues 378-388 (VKKYNNEIIDS). The helical transmembrane segment at 389-409 (GNIWWRLPISAMSSGTIIIFT) threads the bilayer. The Vacuolar portion of the chain corresponds to 410–424 (TKLIMKWNPYILSRN). Residues 425-445 (FLLPLIGLTFEFIILNSYILT) form a helical membrane-spanning segment. The Cytoplasmic segment spans residues 446–453 (MFENLSSS). A helical transmembrane segment spans residues 454-474 (FDFKTIAINEISFLFWIVLAY). Residues 475–491 (QTWKLYDNNYQNTGIYP) are Vacuolar-facing. A helical membrane pass occupies residues 492–512 (FTICYIVMATAGNIGYLFLIF). The Cytoplasmic portion of the chain corresponds to 513–588 (KNIEIVEDEE…NQRTILKESK (76 aa)). Over residues 540-552 (YRDEINGRDDSSR) the composition is skewed to basic and acidic residues. A disordered region spans residues 540 to 561 (YRDEINGRDDSSRDSNSASIPT). A helical transmembrane segment spans residues 589 to 609 (LVYNYDWIIEFLLVVPFSTFL). The Vacuolar segment spans residues 610–636 (LYNSLELIMDAVNQTIQETGDLYKVYK). Asn622 is a glycosylation site (N-linked (GlcNAc...) asparagine). A helical membrane pass occupies residues 637–657 (ILAIGSILISIPTLPFAYKIG). At 658–663 (CQLGKT) the chain is on the cytoplasmic side. The chain crosses the membrane as a helical span at residues 664–684 (LTFISIGCLLISMALAPFTEM). The Vacuolar segment spans residues 685-939 (NPIKFRFMQV…LVKLTEAMVL (255 aa)). 2 N-linked (GlcNAc...) asparagine glycosylation sites follow: Asn810 and Asn820.

This sequence belongs to the peptidase M28 family. The cofactor is Zn(2+).

Its subcellular location is the vacuole membrane. Functionally, may be involved in vacuolar sorting and osmoregulation. In Vanderwaltozyma polyspora (strain ATCC 22028 / DSM 70294 / BCRC 21397 / CBS 2163 / NBRC 10782 / NRRL Y-8283 / UCD 57-17) (Kluyveromyces polysporus), this protein is Vacuolar membrane protease.